Consider the following 608-residue polypeptide: Probable potassium transport system protein Kup (608 aa).

The next 12 helical transmembrane spans lie at 9-29, 46-66, 99-119, 137-157, 165-185, 213-233, 247-267, 285-305, 337-357, 363-383, 396-416, and 419-439; these read LSGV…TSPL, PAAI…VVSV, TPVL…EVVI, PSLD…LFAI, VGKL…VLGL, TSFF…ALYA, WFVV…ALLL, ALLP…QAVI, IYIP…IMSF, LAAA…ILFC, LVAA…AANL, and IFSG…LMTS.

Belongs to the HAK/KUP transporter (TC 2.A.72) family.

It is found in the cell inner membrane. It catalyses the reaction K(+)(in) + H(+)(in) = K(+)(out) + H(+)(out). Functionally, transport of potassium into the cell. Likely operates as a K(+):H(+) symporter. The sequence is that of Probable potassium transport system protein Kup from Aeromonas salmonicida (strain A449).